Here is a 288-residue protein sequence, read N- to C-terminus: Energy-coupling factor transporter ATP-binding protein EcfA3 (288 aa).

One can recognise an ABC transporter domain in the interval 3 to 245; it reads INFRNVSFSY…ESYLRKEKLR (243 aa). ATP is bound at residue 40-47; the sequence is GHTGSGKS.

Belongs to the ABC transporter superfamily. Energy-coupling factor EcfA family. Forms a stable energy-coupling factor (ECF) transporter complex composed of 2 membrane-embedded substrate-binding proteins (S component), 2 ATP-binding proteins (A component) and 2 transmembrane proteins (T component).

It localises to the cell membrane. In terms of biological role, ATP-binding (A) component of a common energy-coupling factor (ECF) ABC-transporter complex. Unlike classic ABC transporters this ECF transporter provides the energy necessary to transport a number of different substrates. This Oenococcus oeni (strain ATCC BAA-331 / PSU-1) protein is Energy-coupling factor transporter ATP-binding protein EcfA3.